A 130-amino-acid polypeptide reads, in one-letter code: Mediator of RNA polymerase II transcription subunit 31 (130 aa).

This sequence belongs to the Mediator complex subunit 31 family. In terms of assembly, component of the Mediator complex.

It is found in the nucleus. Its function is as follows. Component of the Mediator complex, a coactivator involved in the regulated transcription of nearly all RNA polymerase II-dependent genes. Mediator functions as a bridge to convey information from gene-specific regulatory proteins to the basal RNA polymerase II transcription machinery. Mediator is recruited to promoters by direct interactions with regulatory proteins and serves as a scaffold for the assembly of a functional preinitiation complex with RNA polymerase II and the general transcription factors. The polypeptide is Mediator of RNA polymerase II transcription subunit 31 (SOH1) (Candida glabrata (strain ATCC 2001 / BCRC 20586 / JCM 3761 / NBRC 0622 / NRRL Y-65 / CBS 138) (Yeast)).